Here is a 146-residue protein sequence, read N- to C-terminus: MKLHELKPAEGSRKVRNRVGRGTSSGNGKTSGRGQKGQKARSGGGVRLGFEGGQTPLFRRLPKRGFTNINAKEYAIVNLDQLNVFEDGAEVTPVVLIEAGIVKAEKSGIKILGNGELTKKLTVKAAKFSKSAEEAITAKGGSVEVI.

A compositionally biased stretch (basic and acidic residues) spans 1–13 (MKLHELKPAEGSR). Residues 1–51 (MKLHELKPAEGSRKVRNRVGRGTSSGNGKTSGRGQKGQKARSGGGVRLGFE) are disordered. 2 stretches are compositionally biased toward gly residues: residues 23–35 (TSSGNGKTSGRGQ) and 42–51 (SGGGVRLGFE).

The protein belongs to the universal ribosomal protein uL15 family. As to quaternary structure, part of the 50S ribosomal subunit.

Binds to the 23S rRNA. The polypeptide is Large ribosomal subunit protein uL15 (Streptococcus pneumoniae serotype 2 (strain D39 / NCTC 7466)).